A 527-amino-acid polypeptide reads, in one-letter code: MRLRNFYSALALSAAVFAGPLYAAAPAMAAGTISGGFDVGPGGFQGNFNPLAATGGFTWLVTYFEPLVIYDDKLENIVGDLAKSFEISPDQLTYTFKLAHAKWHDGEPFTSKDAKFTFDLARNGKTGSVFAARLASIASVETPDEKTVVIKLKEPSPSMLDTLTKVMMLPEHALASIPPEQLAKNAWWSSTPIGTGPFKFNKYVADQYVELTANPDYRGGRPQVDKLINRYFADPAAAIAALRSGEIQFTYVDSNDVSTFSSDSAFRVIEGDSFVVNYVGFNQEVPLWKDLKVRQAFMHAINRDAIIQSLYGGAAKPANCVYVADRLVPKAIDAYAYDPQKARQLLDEAGWDKINGSKPITILTYYNSPLVANVLAAMQAMLAQVGINIVPRTVDTPTYNSIVYKQGGTADEFPLIFAGLQNGPDPSSINIGLNEKQIPPAGSNIMRIRMPAVTKALDAALAETNPAKRDARYQDVCKATNANLPWGTMWVANRYGVASSKLENFIWTPAPAGGPYQAHPEKWAILE.

A signal peptide spans 1–23; it reads MRLRNFYSALALSAAVFAGPLYA.

The protein belongs to the bacterial solute-binding protein 5 family. In terms of assembly, the complex is composed of two ATP-binding proteins (BOV_A0347 and BOV_A0348), two transmembrane proteins (BOV_A0350 and BOV_A0351) and a solute-binding protein (BOV_A0352).

Its subcellular location is the periplasm. In terms of biological role, probably part of an ABC transporter complex that could be involved in peptide import. The chain is Putative ABC transporter peptide-binding protein BOV_A0352 from Brucella ovis (strain ATCC 25840 / 63/290 / NCTC 10512).